We begin with the raw amino-acid sequence, 235 residues long: MAAAPDLSALEARIGHRFSAADLIEAALTHVSAAQGKRVSYQRLEFLGDRVLGVVVANMLYGAFPDADEGELSRRLADLVRKESCAEVALEWGVEAYVRVGESEKQNASVNRAILGDVCESIIGAVFLDGGFAPAQRVVTQAFEPRMRSPRRPLRDPKTTLQEWAQARGLPPPSYRETARTGPDHAPEFTISVEIAGFQQAEARGFAKRLAEQAAAAAFLTREKIVEPGDRKGAA.

The RNase III domain occupies 7 to 131 (LSALEARIGH…IIGAVFLDGG (125 aa)). Glu-45 contacts Mg(2+). Asp-49 is an active-site residue. 2 residues coordinate Mg(2+): Asp-117 and Glu-120. The active site involves Glu-120. The DRBM domain occupies 156–225 (DPKTTLQEWA…AAAFLTREKI (70 aa)).

Belongs to the ribonuclease III family. In terms of assembly, homodimer. Mg(2+) serves as cofactor.

Its subcellular location is the cytoplasm. It carries out the reaction Endonucleolytic cleavage to 5'-phosphomonoester.. Functionally, digests double-stranded RNA. Involved in the processing of primary rRNA transcript to yield the immediate precursors to the large and small rRNAs (23S and 16S). Processes some mRNAs, and tRNAs when they are encoded in the rRNA operon. Processes pre-crRNA and tracrRNA of type II CRISPR loci if present in the organism. The polypeptide is Ribonuclease 3 (Methylocella silvestris (strain DSM 15510 / CIP 108128 / LMG 27833 / NCIMB 13906 / BL2)).